We begin with the raw amino-acid sequence, 307 residues long: Serine/threonine-protein phosphatase 4 catalytic subunit (307 aa).

An N-acetylalanine modification is found at Ala2. The Mn(2+) site is built by Asp54, His56, Asp82, and Asn114. The Proton donor role is filled by His115. 2 residues coordinate Mn(2+): His164 and His238. The residue at position 307 (Leu307) is a Leucine methyl ester.

This sequence belongs to the PPP phosphatase family. PP-4 (PP-X) subfamily. Serine/threonine-protein phosphatase 4 (PP4) occurs in different assemblies of the catalytic and one or more regulatory subunits. Component of the PP4 complexes PPP4C-PPP4R1, PPP4C-PPP4R2, PPP4C-PPP4R2-PPP4R3A, PPP4C-PPP4R2-PPP4R3B and PPP4C-PPP4R4. The PPP4C-PPP4R2 complex appears to be a tetramer composed of 2 molecules of PPP4C and 2 molecules of PPP4R2. Interacts with REL, NFKB1/p50 and RELA. Interacts with SMN1 and GEMIN4. Interacts with IRS4 (phosphorylated). Interacts with SMEK1/PPP4R3A; the interaction requires PP4R2. Interacts with HDAC3. The cofactor is Mn(2+). Post-translationally, methylation at the C-terminal Leu-307 is critical for interactions with regulatory subunits and functions in DNA repair.

The protein resides in the cytoplasm. It localises to the nucleus. It is found in the cytoskeleton. The protein localises to the microtubule organizing center. Its subcellular location is the centrosome. The catalysed reaction is O-phospho-L-seryl-[protein] + H2O = L-seryl-[protein] + phosphate. It catalyses the reaction O-phospho-L-threonyl-[protein] + H2O = L-threonyl-[protein] + phosphate. In terms of biological role, protein phosphatase that is involved in many processes such as microtubule organization at centrosomes, maturation of spliceosomal snRNPs, apoptosis, DNA repair, tumor necrosis factor (TNF)-alpha signaling, activation of c-Jun N-terminal kinase MAPK8, regulation of histone acetylation, DNA damage checkpoint signaling, NF-kappa-B activation and cell migration. The PPP4C-PPP4R1 PP4 complex may play a role in dephosphorylation and regulation of HDAC3. The PPP4C-PPP4R2-PPP4R3A PP4 complex specifically dephosphorylates H2AX phosphorylated on Ser-140 (gamma-H2AX) generated during DNA replication and required for DNA DSB repair. Dephosphorylates NDEL1 at CDK1 phosphorylation sites and negatively regulates CDK1 activity in interphase. In response to DNA damage, catalyzes RPA2 dephosphorylation, an essential step for DNA repair since it allows the efficient RPA2-mediated recruitment of RAD51 to chromatin. This is Serine/threonine-protein phosphatase 4 catalytic subunit (Ppp4c) from Rattus norvegicus (Rat).